The chain runs to 488 residues: Adenylosuccinate synthetase 1, chloroplastic (488 aa).

The transit peptide at 1-47 (MSLSTVNHAAAAAAAAAGPGKSFSAAAPAAPSVRLPRTRAPAAAAVS) directs the protein to the chloroplast. Residues 75 to 81 (GDEGKGK) and 103 to 105 (GHT) contribute to the GTP site. D76 functions as the Proton acceptor in the catalytic mechanism. Mg(2+)-binding residues include D76 and G103. IMP is bound by residues 76–79 (DEGK), 101–104 (NAGH), T193, R207, Q287, T302, and R366. The Proton donor role is filled by H104. 362 to 368 (TTTGRPR) lines the substrate pocket. Residues R368, 394 to 396 (KLD), and 477 to 479 (GVG) each bind GTP.

Belongs to the adenylosuccinate synthetase family. As to quaternary structure, homodimer. It depends on Mg(2+) as a cofactor.

The protein localises to the plastid. Its subcellular location is the chloroplast. It carries out the reaction IMP + L-aspartate + GTP = N(6)-(1,2-dicarboxyethyl)-AMP + GDP + phosphate + 2 H(+). It participates in purine metabolism; AMP biosynthesis via de novo pathway; AMP from IMP: step 1/2. Its function is as follows. Plays an important role in the de novo pathway and in the salvage pathway of purine nucleotide biosynthesis. Catalyzes the first committed step in the biosynthesis of AMP from IMP. This is Adenylosuccinate synthetase 1, chloroplastic from Oryza sativa subsp. japonica (Rice).